We begin with the raw amino-acid sequence, 329 residues long: Peroxidase 56 (329 aa).

Positions M1 to G31 are cleaved as a signal peptide. Cystine bridges form between C41/C119, C74/C79, C125/C325, and C204/C236. The active-site Proton acceptor is the H72. 5 residues coordinate Ca(2+): D73, V76, G78, E80, and S82. N158 is a glycosylation site (N-linked (GlcNAc...) asparagine). P167 is a substrate binding site. N172 is a glycosylation site (N-linked (GlcNAc...) asparagine). H197 provides a ligand contact to heme b. T198 provides a ligand contact to Ca(2+). N213 is a glycosylation site (N-linked (GlcNAc...) asparagine). Positions 248, 251, and 256 each coordinate Ca(2+).

It belongs to the peroxidase family. Classical plant (class III) peroxidase subfamily. Requires heme b as cofactor. Ca(2+) serves as cofactor.

The protein localises to the secreted. The catalysed reaction is 2 a phenolic donor + H2O2 = 2 a phenolic radical donor + 2 H2O. Its function is as follows. Removal of H(2)O(2), oxidation of toxic reductants, biosynthesis and degradation of lignin, suberization, auxin catabolism, response to environmental stresses such as wounding, pathogen attack and oxidative stress. These functions might be dependent on each isozyme/isoform in each plant tissue. This Arabidopsis thaliana (Mouse-ear cress) protein is Peroxidase 56 (PER56).